The following is a 363-amino-acid chain: Probable F-box protein At4g22165 (363 aa).

The region spanning Pro-7–Leu-56 is the F-box domain.

In Arabidopsis thaliana (Mouse-ear cress), this protein is Probable F-box protein At4g22165.